Reading from the N-terminus, the 610-residue chain is MSIMGLLSSEQLNQLKLVLDTLSKNQLIWLSGYLLGLVNSQTSTDIGVTASGVSAGLELKPDLIDNTIIVISASQTGNARNIAKQLYSDLVEAGLRAVLFSAGEYKFKKISEISLLIFITSTHGEGEPPEEALALYKYLFSEKALRMEKTSFIVLSLGDRSYEYFAKAGKDFDKRFEDLGANRLYDRVDLDVDFQSEVDKWKEKVVSLCKSKIVSIVSKDKCINIQNNIVFKKKNPVTSYCKEFPLIAYLLNRQKITSCNSLKDVHHLEFDISGSGLCYQPGDALGIWYENDYNLVYELLELLNLTGRESVQIKNQSMCLDEALVKYCDLTQNTPVVVKSIATISQDKILLNLLQNQNQLNSFCSTTPIVEMFYQISMTKQLSSQELIQILRPMRPRFYSIASAQSEVGEEIHITVSVVRYTINGRIRSGGASSYLVDRVQDHDEIRIFVESNDNFRLPKDPNVSIIMIGAGTGIAPFRSFMQQRALDKALGKNWLFFGNLKFTDDFLYQIEWKTYFKSGILNKIDTAWSRDQDYKVYVQDKLLSNGLELWDWIQKGAYIYVCGDAKYMARDVEQALVTVVSIHGNMNMDQSNDFWNEMRVQHRYQRDIY.

One can recognise a Flavodoxin-like domain in the interval 68–206; sequence IIVISASQTG…EVDKWKEKVV (139 aa). Residues 74–79, 121–124, and 157–166 contribute to the FMN site; these read SQTGNA, STHG, and LGDRSYEYFA. Positions 243-459 constitute an FAD-binding FR-type domain; sequence EFPLIAYLLN…VESNDNFRLP (217 aa). Residues threonine 331, serine 365, 397 to 400, 415 to 417, tyrosine 421, and 430 to 433 each bind FAD; these read RFYS, TVS, and GGAS. NADP(+) is bound by residues 530-531, 536-540, and aspartate 572; these read SR and KVYVQ. FAD is bound at residue tyrosine 610.

This sequence belongs to the NADPH-dependent sulphite reductase flavoprotein subunit CysJ family. In the N-terminal section; belongs to the flavodoxin family. It in the C-terminal section; belongs to the flavoprotein pyridine nucleotide cytochrome reductase family. Alpha(8)-beta(8). The alpha component is a flavoprotein, the beta component is a hemoprotein. It depends on FAD as a cofactor. FMN serves as cofactor.

The catalysed reaction is hydrogen sulfide + 3 NADP(+) + 3 H2O = sulfite + 3 NADPH + 4 H(+). The protein operates within sulfur metabolism; hydrogen sulfide biosynthesis; hydrogen sulfide from sulfite (NADPH route): step 1/1. Functionally, component of the sulfite reductase complex that catalyzes the 6-electron reduction of sulfite to sulfide. This is one of several activities required for the biosynthesis of L-cysteine from sulfate. The flavoprotein component catalyzes the electron flow from NADPH -&gt; FAD -&gt; FMN to the hemoprotein component. The polypeptide is Sulfite reductase [NADPH] flavoprotein alpha-component (Blochmanniella floridana).